We begin with the raw amino-acid sequence, 536 residues long: Probable galacturonosyltransferase 10 (536 aa).

The Cytoplasmic portion of the chain corresponds to 1–16 (MRRRGGDSFRRAGRRK). A helical; Signal-anchor for type II membrane protein transmembrane segment spans residues 17–37 (ISNVVWWVLSGIALLLFFLIL). The Lumenal portion of the chain corresponds to 38 to 536 (SKAGHIEPRP…SPFMQQCNFH (499 aa)). 5 N-linked (GlcNAc...) asparagine glycosylation sites follow: Asn-64, Asn-246, Asn-300, Asn-403, and Asn-436.

This sequence belongs to the glycosyltransferase 8 family. Expressed in roots, inflorescences, siliques, leaves and stems.

It is found in the golgi apparatus membrane. It participates in glycan metabolism; pectin biosynthesis. In terms of biological role, may be involved in pectin and/or xylans biosynthesis in cell walls. This chain is Probable galacturonosyltransferase 10 (GAUT10), found in Arabidopsis thaliana (Mouse-ear cress).